A 396-amino-acid chain; its full sequence is Elongation factor Tu 2 (396 aa).

Residues 10 to 206 (KPHVNVGTIG…ALDTYIPTPK (197 aa)) enclose the tr-type G domain. The G1 stretch occupies residues 19-26 (GHVDHGKT). Position 19-26 (19-26 (GHVDHGKT)) interacts with GTP. Thr26 provides a ligand contact to Mg(2+). Residues 60-64 (GITIS) are G2. The segment at 81 to 84 (DCPG) is G3. GTP contacts are provided by residues 81 to 85 (DCPGH) and 136 to 139 (NKAD). A G4 region spans residues 136-139 (NKAD). The G5 stretch occupies residues 174–176 (SAL).

The protein belongs to the TRAFAC class translation factor GTPase superfamily. Classic translation factor GTPase family. EF-Tu/EF-1A subfamily. As to quaternary structure, monomer.

It localises to the cytoplasm. The catalysed reaction is GTP + H2O = GDP + phosphate + H(+). In terms of biological role, GTP hydrolase that promotes the GTP-dependent binding of aminoacyl-tRNA to the A-site of ribosomes during protein biosynthesis. In Ruthia magnifica subsp. Calyptogena magnifica, this protein is Elongation factor Tu 2.